Consider the following 305-residue polypeptide: Nucleotide-binding protein Saro_2904 (305 aa).

15–22 (GLLGAGKT) contacts ATP. Position 68–71 (68–71 (DTRT)) interacts with GTP.

The protein belongs to the RapZ-like family.

Displays ATPase and GTPase activities. This chain is Nucleotide-binding protein Saro_2904, found in Novosphingobium aromaticivorans (strain ATCC 700278 / DSM 12444 / CCUG 56034 / CIP 105152 / NBRC 16084 / F199).